Reading from the N-terminus, the 400-residue chain is Cytoplasmic polyadenylated homeobox-like protein 2 (400 aa).

Residues 1-29 (MSSQAFPAEEDHHNEERQTKKKRKTKHRH) form a disordered region. The segment covering 9-18 (EEDHHNEERQ) has biased composition (basic and acidic residues). Positions 19-29 (TKKKRKTKHRH) are enriched in basic residues. Positions 24–83 (KTKHRHKFSEELLQELKEIFGENGYPDFTTRKTLANKFDCPVNVINNWFQNNRARLPPEE) form a DNA-binding region, homeobox.

It is found in the nucleus. This chain is Cytoplasmic polyadenylated homeobox-like protein 2, found in Homo sapiens (Human).